The following is a 103-amino-acid chain: Large ribosomal subunit protein bL21 (103 aa).

It belongs to the bacterial ribosomal protein bL21 family. Part of the 50S ribosomal subunit. Contacts protein L20.

In terms of biological role, this protein binds to 23S rRNA in the presence of protein L20. In Parvibaculum lavamentivorans (strain DS-1 / DSM 13023 / NCIMB 13966), this protein is Large ribosomal subunit protein bL21.